A 295-amino-acid chain; its full sequence is Protoheme IX farnesyltransferase (295 aa).

The next 9 membrane-spanning stretches (helical) occupy residues 9-29 (ITKPGIIFGNVLSVAGGFFLA), 36-56 (FGVFLAAVIGTSLVVASGCVF), 80-100 (LVSLKLALLYATILGVAGVAL), 108-128 (LAALFAVIGFVIYVGLYSLYL), 135-155 (GTLVGSLSGAMPPVIGYCAVT), 163-183 (LTLLVMFSLWQMPHSYAIAIF), 209-229 (IMLYILAFLVATLMLTVGGYA), 230-250 (GLNYLAVAAGMGMYWLYMAWK), and 265-285 (FVFSIFTITALSVMMSVDFQV).

It belongs to the UbiA prenyltransferase family. Protoheme IX farnesyltransferase subfamily.

The protein localises to the cell inner membrane. The catalysed reaction is heme b + (2E,6E)-farnesyl diphosphate + H2O = Fe(II)-heme o + diphosphate. It functions in the pathway porphyrin-containing compound metabolism; heme O biosynthesis; heme O from protoheme: step 1/1. In terms of biological role, converts heme B (protoheme IX) to heme O by substitution of the vinyl group on carbon 2 of heme B porphyrin ring with a hydroxyethyl farnesyl side group. In Pseudomonas savastanoi pv. phaseolicola (strain 1448A / Race 6) (Pseudomonas syringae pv. phaseolicola (strain 1448A / Race 6)), this protein is Protoheme IX farnesyltransferase.